The chain runs to 314 residues: Secreted frizzled-related protein 1 (314 aa).

The N-terminal stretch at 1-31 (MGVGRSEGGRRGAALGVLLALGVALLAVGSA) is a signal peptide. An FZ domain is found at 53-169 (TKPHQCVAIP…FPQDYVCIAM (117 aa)). Intrachain disulfides connect Cys58-Cys121, Cys68-Cys114, Cys105-Cys140, Cys129-Cys166, and Cys133-Cys157. Asn173 carries an N-linked (GlcNAc...) asparagine glycan. 3 cysteine pairs are disulfide-bonded: Cys186–Cys256, Cys189–Cys258, and Cys203–Cys306. Positions 186-306 (CPPCDNEMKS…FMKKVKAPDC (121 aa)) constitute an NTR domain.

It belongs to the secreted frizzled-related protein (sFRP) family.

Its subcellular location is the secreted. In terms of biological role, soluble frizzled-related proteins (sFRPS) function as modulators of Wnt signaling through direct interaction with Wnts. They have a role in regulating cell growth and differentiation in specific cell types. This Gallus gallus (Chicken) protein is Secreted frizzled-related protein 1 (SFRP1).